Here is an 82-residue protein sequence, read N- to C-terminus: Putative membrane protein insertion efficiency factor (82 aa).

It belongs to the UPF0161 family.

It is found in the cell inner membrane. Its function is as follows. Could be involved in insertion of integral membrane proteins into the membrane. This is Putative membrane protein insertion efficiency factor from Rickettsia peacockii (strain Rustic).